Here is a 414-residue protein sequence, read N- to C-terminus: Putative transporter AmpG 4 (414 aa).

12 helical membrane-spanning segments follow: residues isoleucine 15–valine 35, isoleucine 44–tryptophan 63, tryptophan 84–proline 104, threonine 109–valine 129, valine 150–isoleucine 170, leucine 177–asparagine 197, phenylalanine 230–alanine 250, isoleucine 268–valine 288, phenylalanine 295–leucine 315, alanine 324–valine 344, tyrosine 360–glycine 379, and glycine 389–asparagine 409.

The protein belongs to the major facilitator superfamily.

The protein resides in the cell inner membrane. This Rickettsia conorii (strain ATCC VR-613 / Malish 7) protein is Putative transporter AmpG 4 (ampG4).